We begin with the raw amino-acid sequence, 680 residues long: Methionine--tRNA ligase (680 aa).

The 'HIGH' region signature appears at 15 to 25 (PYANGPVHIGH). Positions 147, 150, 160, and 163 each coordinate Zn(2+). Positions 332–336 (KISTS) match the 'KMSKS' region motif. T335 is an ATP binding site. One can recognise a tRNA-binding domain in the interval 579–680 (DFLKLDIRVG…AEVAPGSQVK (102 aa)).

The protein belongs to the class-I aminoacyl-tRNA synthetase family. MetG type 1 subfamily. As to quaternary structure, homodimer. Requires Zn(2+) as cofactor.

The protein localises to the cytoplasm. It catalyses the reaction tRNA(Met) + L-methionine + ATP = L-methionyl-tRNA(Met) + AMP + diphosphate. Its function is as follows. Is required not only for elongation of protein synthesis but also for the initiation of all mRNA translation through initiator tRNA(fMet) aminoacylation. In Porphyromonas gingivalis (strain ATCC 33277 / DSM 20709 / CIP 103683 / JCM 12257 / NCTC 11834 / 2561), this protein is Methionine--tRNA ligase.